A 287-amino-acid polypeptide reads, in one-letter code: Ribonuclease Z (287 aa).

His64, His66, Asp68, His69, His124, Asp191, and His250 together coordinate Zn(2+). Asp68 (proton acceptor) is an active-site residue.

It belongs to the RNase Z family. In terms of assembly, homodimer. Zn(2+) serves as cofactor.

It carries out the reaction Endonucleolytic cleavage of RNA, removing extra 3' nucleotides from tRNA precursor, generating 3' termini of tRNAs. A 3'-hydroxy group is left at the tRNA terminus and a 5'-phosphoryl group is left at the trailer molecule.. In terms of biological role, zinc phosphodiesterase, which displays some tRNA 3'-processing endonuclease activity. Probably involved in tRNA maturation, by removing a 3'-trailer from precursor tRNA. The polypeptide is Ribonuclease Z (Pyrobaculum arsenaticum (strain DSM 13514 / JCM 11321 / PZ6)).